The sequence spans 75 residues: ATP synthase subunit c (75 aa).

Helical transmembrane passes span 12 to 32 and 49 to 69; these read LASIGYGLAAIGSAIGVGIVV and LTVLMYVGVAFTEALALIGIG.

It belongs to the ATPase C chain family. F-type ATPases have 2 components, F(1) - the catalytic core - and F(0) - the membrane proton channel. F(1) has five subunits: alpha(3), beta(3), gamma(1), delta(1), epsilon(1). F(0) has three main subunits: a(1), b(2) and c(10-14). The alpha and beta chains form an alternating ring which encloses part of the gamma chain. F(1) is attached to F(0) by a central stalk formed by the gamma and epsilon chains, while a peripheral stalk is formed by the delta and b chains.

It localises to the cell membrane. F(1)F(0) ATP synthase produces ATP from ADP in the presence of a proton or sodium gradient. F-type ATPases consist of two structural domains, F(1) containing the extramembraneous catalytic core and F(0) containing the membrane proton channel, linked together by a central stalk and a peripheral stalk. During catalysis, ATP synthesis in the catalytic domain of F(1) is coupled via a rotary mechanism of the central stalk subunits to proton translocation. Functionally, key component of the F(0) channel; it plays a direct role in translocation across the membrane. A homomeric c-ring of between 10-14 subunits forms the central stalk rotor element with the F(1) delta and epsilon subunits. The protein is ATP synthase subunit c of Tropheryma whipplei (strain TW08/27) (Whipple's bacillus).